The following is a 349-amino-acid chain: CCN family member 2 (349 aa).

Residues 1 to 26 (MSATGLGPVRCAFVLLLALCSRPASS) form the signal peptide. Residues 27-98 (QDCSAPCQCP…NRKIGVCTAK (72 aa)) enclose the IGFBP N-terminal domain. 6 disulfides stabilise this stretch: cysteine 29-cysteine 54, cysteine 33-cysteine 56, cysteine 35-cysteine 57, cysteine 43-cysteine 60, cysteine 68-cysteine 82, and cysteine 74-cysteine 95. Residues 101–167 (APCVFGGTVY…GKCCEEWVCD (67 aa)) enclose the VWFC domain. The TSP type-1 domain occupies 198 to 243 (NCLVQTTEWSACSKTCGMGISTRVTNDNAFCRLEKQSRLCMVRPCE). Residues 247–349 (EENIKKGKKC…YYRKMYGDMA (103 aa)) form a heparin-binding region. 5 disulfides stabilise this stretch: cysteine 256–cysteine 293, cysteine 273–cysteine 307, cysteine 284–cysteine 323, cysteine 287–cysteine 325, and cysteine 292–cysteine 329. The CTCK domain occupies 256–330 (CIRTPKISKP…KTCACHYNCP (75 aa)).

The protein belongs to the CCN family. In terms of assembly, monomer. Interacts with TSKU.

It localises to the secreted. Its subcellular location is the extracellular space. It is found in the extracellular matrix. Major connective tissue mitoattractant secreted by vascular endothelial cells. Promotes proliferation and differentiation of chondrocytes. Is involved in the stimulation of osteoblast differentiation and has a critical role in osteogenesis. Mediates heparin- and divalent cation-dependent cell adhesion in many cell types including fibroblasts, myofibroblasts, endothelial and epithelial cells. Enhances fibroblast growth factor-induced DNA synthesis. The chain is CCN family member 2 (CCN2) from Bos taurus (Bovine).